Consider the following 246-residue polypeptide: Probable transcriptional regulatory protein CLL_A1008 (246 aa).

It belongs to the TACO1 family.

Its subcellular location is the cytoplasm. This chain is Probable transcriptional regulatory protein CLL_A1008, found in Clostridium botulinum (strain Eklund 17B / Type B).